A 222-amino-acid chain; its full sequence is Probable nicotinate-nucleotide adenylyltransferase (222 aa).

It belongs to the NadD family.

The catalysed reaction is nicotinate beta-D-ribonucleotide + ATP + H(+) = deamido-NAD(+) + diphosphate. The protein operates within cofactor biosynthesis; NAD(+) biosynthesis; deamido-NAD(+) from nicotinate D-ribonucleotide: step 1/1. Catalyzes the reversible adenylation of nicotinate mononucleotide (NaMN) to nicotinic acid adenine dinucleotide (NaAD). This is Probable nicotinate-nucleotide adenylyltransferase from Pseudomonas syringae pv. tomato (strain ATCC BAA-871 / DC3000).